The following is a 28-amino-acid chain: Mast cell degranulating peptide (28 aa).

Disulfide bonds link cysteine 2–cysteine 18 and cysteine 4–cysteine 22.

As to expression, expressed by the venom gland.

Its subcellular location is the secreted. Mast cell degranulating peptide. This is Mast cell degranulating peptide from Bombus pensylvanicus (American bumblebee).